Consider the following 410-residue polypeptide: Translation initiation factor 2 subunit gamma (410 aa).

The tr-type G domain occupies 6-203 (QSEVNIGMVG…AIQDFIPTPE (198 aa)). The interval 15–22 (GHVDHGKT) is G1. Mg(2+) contacts are provided by aspartate 18, threonine 22, glycine 43, and serine 45. A GTP-binding site is contributed by 18 to 23 (DHGKTS). A G2 region spans residues 43 to 47 (GISIR). Zn(2+) is bound by residues cysteine 58, cysteine 61, cysteine 73, and cysteine 76. The G3 stretch occupies residues 90-93 (DAPG). GTP contacts are provided by residues 146–149 (NKID) and 181–183 (SAH). Residues 146–149 (NKID) form a G4 region. Residues 181–183 (SAH) form a G5 region.

Belongs to the TRAFAC class translation factor GTPase superfamily. Classic translation factor GTPase family. EIF2G subfamily. In terms of assembly, heterotrimer composed of an alpha, a beta and a gamma chain. Mg(2+) is required as a cofactor.

It carries out the reaction GTP + H2O = GDP + phosphate + H(+). In terms of biological role, eIF-2 functions in the early steps of protein synthesis by forming a ternary complex with GTP and initiator tRNA. In Methanococcus maripaludis (strain DSM 14266 / JCM 13030 / NBRC 101832 / S2 / LL), this protein is Translation initiation factor 2 subunit gamma.